Consider the following 237-residue polypeptide: Urease subunit alpha (237 aa).

Residues Met1–Asp102 form a urease gamma region. Positions Asn103 to Gln237 are urease beta.

This sequence in the N-terminal section; belongs to the urease gamma subunit family. In the C-terminal section; belongs to the urease beta subunit family. Heterohexamer of 3 UreA (alpha) and 3 UreB (beta) subunits.

It localises to the cytoplasm. The enzyme catalyses urea + 2 H2O + H(+) = hydrogencarbonate + 2 NH4(+). The protein operates within nitrogen metabolism; urea degradation; CO(2) and NH(3) from urea (urease route): step 1/1. This chain is Urease subunit alpha, found in Helicobacter felis.